Reading from the N-terminus, the 322-residue chain is HPr kinase/phosphorylase (322 aa).

Active-site residues include His146 and Lys167. Gly161–Ser168 lines the ATP pocket. Ser168 is a Mg(2+) binding site. The active-site Proton acceptor; for phosphorylation activity. Proton donor; for dephosphorylation activity is the Asp185. Residues Leu209–Asp218 are important for the catalytic mechanism of both phosphorylation and dephosphorylation. Glu210 contributes to the Mg(2+) binding site. Arg250 is an active-site residue. The important for the catalytic mechanism of dephosphorylation stretch occupies residues Gln271–Arg276.

The protein belongs to the HPrK/P family. Homohexamer. Mg(2+) serves as cofactor.

It carries out the reaction [HPr protein]-L-serine + ATP = [HPr protein]-O-phospho-L-serine + ADP + H(+). The catalysed reaction is [HPr protein]-O-phospho-L-serine + phosphate + H(+) = [HPr protein]-L-serine + diphosphate. Its function is as follows. Catalyzes the ATP- as well as the pyrophosphate-dependent phosphorylation of a specific serine residue in HPr, a phosphocarrier protein of the phosphoenolpyruvate-dependent sugar phosphotransferase system (PTS). HprK/P also catalyzes the pyrophosphate-producing, inorganic phosphate-dependent dephosphorylation (phosphorolysis) of seryl-phosphorylated HPr (P-Ser-HPr). This chain is HPr kinase/phosphorylase, found in Burkholderia mallei (strain NCTC 10247).